The primary structure comprises 412 residues: Indian hedgehog B protein (412 aa).

A signal peptide spans Met1 to Gly23. The N-palmitoyl cysteine moiety is linked to residue Cys24. Ca(2+)-binding residues include Glu89, Glu90, Asp95, Thr125, Glu126, Asp129, and Asp131. 3 residues coordinate Zn(2+): His140, Asp147, and His182. Gly197 carries the Cholesterol glycine ester lipid modification.

This sequence belongs to the hedgehog family. As to quaternary structure, multimer. In terms of assembly, interacts with BOC and CDON. Interacts with PTCH1. Interacts with glypican GPC3. Cholesterylation is required for N-product targeting to lipid rafts and multimerization. Post-translationally, the C-terminal domain displays an autoproteolysis activity and a cholesterol transferase activity. Both activities result in the cleavage of the full-length protein and covalent attachment of a cholesterol moiety to the C-terminal of the newly generated N-product. The N-product is the active species in both local and long-range signaling, whereas the C-product is degraded in the endoplasmic reticulum. In terms of processing, N-palmitoylation by HHAT of N-product is required for indian hedgehog protein N-product multimerization and full activity. As to expression, expressed exclusively in the notochord.

It localises to the cell membrane. It is found in the endoplasmic reticulum membrane. Its subcellular location is the golgi apparatus membrane. The protein resides in the secreted. The enzyme catalyses glycyl-L-cysteinyl-[protein] + cholesterol + H(+) = [protein]-C-terminal glycyl cholesterol ester + N-terminal L-cysteinyl-[protein]. Signal involved in the early induction and patterning of anterodorsal ectoderm, nervous system and somites. It is involved in the regulation of endochondral skeleton formation, and the development of retinal pigment epithelium (RPE), photoreceptors and periocular tissues. In terms of biological role, the C-terminal part of the indian hedgehog protein precursor displays an autoproteolysis and a cholesterol transferase activity. Both activities result in the cleavage of the full-length protein into two parts followed by the covalent attachment of a cholesterol moiety to the C-terminal of the newly generated N-product. Both activities occur in the endoplasmic reticulum. Its function is as follows. The dually lipidated indian hedgehog protein N-product is a morphogen which is essential for a variety of patterning events during development. Binds to the patched (PTCH1) receptor, which functions in association with smoothened (SMO), to activate the transcription of target genes. In the notochord, induces somite patterning and muscle pioneer differentiation. The polypeptide is Indian hedgehog B protein (ihhb) (Danio rerio (Zebrafish)).